A 302-amino-acid polypeptide reads, in one-letter code: Glycine N-acyltransferase-like protein 1 (302 aa).

This sequence belongs to the glycine N-acyltransferase family. In terms of tissue distribution, expressed in liver and kidney and, at lower levels, in pancreas, testis, ovary and stomach.

The catalysed reaction is an acyl-CoA + L-glutamine = an N(2)-acyl-L-glutamine + CoA + H(+). In terms of biological role, acyltransferase which transfers an acyl group to the N-terminus of glutamine. Can use phenylacetyl-CoA as an acyl donor. This Homo sapiens (Human) protein is Glycine N-acyltransferase-like protein 1.